A 321-amino-acid chain; its full sequence is ATP-dependent 6-phosphofructokinase (321 aa).

Residue glycine 11 coordinates ATP. 21–25 contributes to the ADP binding site; sequence RAVVR. Residues 72–73 and 102–105 contribute to the ATP site; these read RC and GDGS. Residue aspartate 103 participates in Mg(2+) binding. Position 126–128 (126–128) interacts with substrate; it reads TID. The Proton acceptor role is filled by aspartate 128. Arginine 155 lines the ADP pocket. Substrate-binding positions include arginine 163 and 170–172; that span reads MGR. Residues 186–188, arginine 212, and 214–216 each bind ADP; these read GAE and KLH. Substrate contacts are provided by residues glutamate 223, arginine 245, and 251–254; that span reads HIQR.

This sequence belongs to the phosphofructokinase type A (PFKA) family. ATP-dependent PFK group I subfamily. Prokaryotic clade 'B1' sub-subfamily. In terms of assembly, homotetramer. The cofactor is Mg(2+).

Its subcellular location is the cytoplasm. The enzyme catalyses beta-D-fructose 6-phosphate + ATP = beta-D-fructose 1,6-bisphosphate + ADP + H(+). The protein operates within carbohydrate degradation; glycolysis; D-glyceraldehyde 3-phosphate and glycerone phosphate from D-glucose: step 3/4. Allosterically activated by ADP and other diphosphonucleosides, and allosterically inhibited by phosphoenolpyruvate. Functionally, catalyzes the phosphorylation of D-fructose 6-phosphate to fructose 1,6-bisphosphate by ATP, the first committing step of glycolysis. This chain is ATP-dependent 6-phosphofructokinase, found in Caldanaerobacter subterraneus subsp. tengcongensis (strain DSM 15242 / JCM 11007 / NBRC 100824 / MB4) (Thermoanaerobacter tengcongensis).